Consider the following 219-residue polypeptide: Asperlin biosynthesis cluster protein I (219 aa).

Positions 97 to 124 (TGSSDNSPTATGIGAAGLTGDRPSSSGA) are disordered. Over residues 105-116 (TATGIGAAGLTG) the composition is skewed to low complexity.

It participates in polyketide biosynthesis. Its function is as follows. Part of the gene cluster that mediates the biosynthesis of asperlin, a polyketide showing anti-inflammatory, antitumor and antibiotic activities. The first step of the asperlin biosynthesis is the production of the intermediate 2,4,6-octatrienoic acid by the highly redusing polyketide synthase alnA with cleavage of the PKS product by the esterase alnB. 2,4,6-octatrienoic acid is further converted to asperlin via several steps involving the remaining enzymes from the cluster. This Emericella nidulans (strain FGSC A4 / ATCC 38163 / CBS 112.46 / NRRL 194 / M139) (Aspergillus nidulans) protein is Asperlin biosynthesis cluster protein I.